A 67-amino-acid polypeptide reads, in one-letter code: ATP synthase protein 8 (67 aa).

A helical transmembrane segment spans residues 8–24 (TWFITILSMLMTLFILF). Position 54 is an N6-acetyllysine; alternate (lysine 54). At lysine 54 the chain carries N6-succinyllysine; alternate. Position 57 is an N6-acetyllysine (lysine 57).

The protein belongs to the ATPase protein 8 family. As to quaternary structure, F-type ATPases have 2 components, CF(1) - the catalytic core - and CF(0) - the membrane proton channel. Component of an ATP synthase complex composed of ATP5PB, ATP5MC1, ATP5F1E, ATP5PD, ATP5ME, ATP5PF, ATP5MF, MT-ATP6, MT-ATP8, ATP5F1A, ATP5F1B, ATP5F1D, ATP5F1C, ATP5PO, ATP5MG, ATP5MK and ATP5MJ. Interacts with PRICKLE3.

The protein resides in the mitochondrion membrane. Its function is as follows. Mitochondrial membrane ATP synthase (F(1)F(0) ATP synthase or Complex V) produces ATP from ADP in the presence of a proton gradient across the membrane which is generated by electron transport complexes of the respiratory chain. F-type ATPases consist of two structural domains, F(1) - containing the extramembraneous catalytic core and F(0) - containing the membrane proton channel, linked together by a central stalk and a peripheral stalk. During catalysis, ATP synthesis in the catalytic domain of F(1) is coupled via a rotary mechanism of the central stalk subunits to proton translocation. Part of the complex F(0) domain. Minor subunit located with subunit a in the membrane. This Vicugna pacos (Alpaca) protein is ATP synthase protein 8 (MT-ATP8).